The primary structure comprises 456 residues: RuvB-like 1 (456 aa).

Lysine 2 participates in a covalent cross-link: Glycyl lysine isopeptide (Lys-Gly) (interchain with G-Cter in SUMO2). Residue 70–77 (GPPGTGKT) coordinates ATP. Lysine 225 is covalently cross-linked (Glycyl lysine isopeptide (Lys-Gly) (interchain with G-Cter in SUMO1); alternate). Lysine 225 is covalently cross-linked (Glycyl lysine isopeptide (Lys-Gly) (interchain with G-Cter in SUMO2); alternate). Lysine 445 participates in a covalent cross-link: Glycyl lysine isopeptide (Lys-Gly) (interchain with G-Cter in SUMO2). Lysine 453 is subject to N6-acetyllysine.

The protein belongs to the RuvB family. In terms of assembly, forms homohexameric rings. Can form a dodecamer with RUVBL2 made of two stacked hexameric rings; however, even though RUVBL1 and RUVBL2 are present in equimolar ratio, the oligomeric status of each hexamer is not known. Oligomerization may regulate binding to nucleic acids and conversely, binding to nucleic acids may affect the dodecameric assembly. Interaction of the complex with DHX34 results in conformational changes of the N-terminus of the RUVBL2 subunits, resulting in loss of nucleotide binding ability and ATP hydrolysis of the complex. Interacts with the transcriptional activation domain of MYC. Component of the RNA polymerase II holoenzyme complex. May also act to bridge the LEF1/TCF1-CTNNB1 complex and TBP. Component of the NuA4 histone acetyltransferase complex which contains the catalytic subunit KAT5/TIP60 and the subunits EP400, TRRAP/PAF400, BRD8/SMAP, EPC1, DMAP1/DNMAP1, RUVBL1/TIP49, RUVBL2, ING3, actin, ACTL6A/BAF53A, MORF4L1/MRG15, MORF4L2/MRGX, MRGBP, YEATS4/GAS41, VPS72/YL1 and MEAF6. The NuA4 complex interacts with MYC and the adenovirus E1A protein. RUVBL1 interacts with EP400. Component of a NuA4-related complex which contains EP400, TRRAP/PAF400, SRCAP, BRD8/SMAP, EPC1, DMAP1/DNMAP1, RUVBL1/TIP49, RUVBL2, actin, ACTL6A/BAF53A, VPS72 and YEATS4/GAS41. Component of the BAF53 complex, at least composed of ACTL6A/BAF53A, RUVBL1/TIP49, SMARCA2/BRM, and TRRAP/PAF400. Component of some MLL1/MLL complex, at least composed of the core components KMT2A/MLL1, ASH2L, HCFC1/HCF1, WDR5 and RBBP5, as well as the facultative components BACC1, CHD8, E2F6, HSP70, INO80C, KANSL1, LAS1L, MAX, MCRS1, MGA, MYST1/MOF, PELP1, PHF20, PRP31, RING2, RUVB1/TIP49A, RUVB2/TIP49B, SENP3, TAF1, TAF4, TAF6, TAF7, TAF9 and TEX10. Associates with alpha and gamma tubulins, particularly during metaphase and early anaphase. Interacts with NPAT. Component of the chromatin-remodeling INO80 complex; specifically part of a complex module associated with the helicase ATP-binding and the helicase C-terminal domain of INO80. Interacts with IGHMBP2. Interacts with OFD1. Interacts with HINT1. Component of a complex with USP49 and PSMC5. Component of a SWR1-like complex. Component of the R2TP complex composed at least of RUVBL1, RUVBL2, RPAP3 and PIHD1. Component of the PAQosome complex which is responsible for the biogenesis of several protein complexes and which consists of R2TP complex members RUVBL1, RUVBL2, RPAP3 and PIH1D1, URI complex members PFDN2, PFDN6, PDRG1, UXT and URI1 as well as ASDURF, POLR2E and DNAAF10/WDR92. Interacts with PIH1D1. Interacts with ITFG1. Interacts with WAC; WAC positively regulates MTOR activity by promoting the assembly of the TTT complex composed of TELO2, TTI1 and TTI2 and the RUVBL complex composed of RUVBL1 and RUVBL2 into the TTT-RUVBL complex which leads to the dimerization of the mTORC1 complex and its subsequent activation. The RUVBL1/RUVBL2 complex interacts with ZNHIT1 (via HIT-type zinc finger), ZNHIT3 (via HIT-type zinc finger), ZNHIT6 (via HIT-type zinc finger) and DDX59/ZNHIT5 (via HIT-type zinc finger) in the presence of ADP. Interacts with NOPCHAP1; the interaction is direct and disrupted upon ATP binding. Interacts with SMG1. Interacts with NOP2, NOP56 and NUFIP1.

It is found in the nucleus matrix. Its subcellular location is the nucleus. The protein localises to the nucleoplasm. It localises to the cytoplasm. The protein resides in the membrane. It is found in the cytoskeleton. Its subcellular location is the microtubule organizing center. The protein localises to the centrosome. It localises to the dynein axonemal particle. The enzyme catalyses ATP + H2O = ADP + phosphate + H(+). In terms of biological role, possesses single-stranded DNA-stimulated ATPase and ATP-dependent DNA helicase (3' to 5') activity; hexamerization is thought to be critical for ATP hydrolysis and adjacent subunits in the ring-like structure contribute to the ATPase activity. Component of the NuA4 histone acetyltransferase complex which is involved in transcriptional activation of select genes principally by acetylation of nucleosomal histones H4 and H2A. This modification may both alter nucleosome-DNA interactions and promote interaction of the modified histones with other proteins which positively regulate transcription. This complex may be required for the activation of transcriptional programs associated with oncogene and proto-oncogene mediated growth induction, tumor suppressor mediated growth arrest and replicative senescence, apoptosis, and DNA repair. The NuA4 complex ATPase and helicase activities seem to be, at least in part, contributed by the association of RUVBL1 and RUVBL2 with EP400. NuA4 may also play a direct role in DNA repair when recruited to sites of DNA damage. Component of a SWR1-like complex that specifically mediates the removal of histone H2A.Z/H2AZ1 from the nucleosome. Proposed core component of the chromatin remodeling INO80 complex which exhibits DNA- and nucleosome-activated ATPase activity and catalyzes ATP-dependent nucleosome sliding. Plays an essential role in oncogenic transformation by MYC and also modulates transcriptional activation by the LEF1/TCF1-CTNNB1 complex. Essential for cell proliferation. May be able to bind plasminogen at cell surface and enhance plasminogen activation. This chain is RuvB-like 1 (Ruvbl1), found in Mus musculus (Mouse).